We begin with the raw amino-acid sequence, 322 residues long: Packaging protein 3 (322 aa).

The disordered stretch occupies residues 1 to 24 (MHPILKNIRSQPDQGRAEEHNPEL). Residues 1–127 (MHPILKNIRS…RDVERWQHDT (127 aa)) form an interaction with packaging protein 1 region.

Belongs to the adenoviridae packaging protein 3 family. Part of the genome packaging complex composed of packaging proteins 1, 2 and 3; this complex specifically binds to the packaging sequence on the left end of viral genomic DNA and performs packaging of the viral genome. Interacts with hexon-linking protein IIIa; this interaction is required to promote correct genome packaging. In terms of processing, cleaved at different sites by the viral protease during virion maturation.

It is found in the host nucleus. Involved in viral genome packaging through its interaction with packaging proteins 1 and 2. After proteolytic cleavage by adenovirus protease, L1 52/55k protein is removed from the capsid during viral maturation. In Pantherophis guttatus (Corn snake), this protein is Packaging protein 3.